Here is a 380-residue protein sequence, read N- to C-terminus: Chaperone protein DnaJ (380 aa).

The 66-residue stretch at 5–70 folds into the J domain; it reads DYYEILGVAK…QKRAAYDQYG (66 aa). The CR-type zinc finger occupies 135-213; sequence GVSKEIRIPT…CHGHGRVEKS (79 aa). Cysteine 148, cysteine 151, cysteine 165, cysteine 168, cysteine 187, cysteine 190, cysteine 201, and cysteine 204 together coordinate Zn(2+). 4 CXXCXGXG motif repeats span residues 148–155, 165–172, 187–194, and 201–208; these read CGVCHGSG, CSTCHGAG, CPTCHGRG, and CNACHGHG.

The protein belongs to the DnaJ family. Homodimer. Zn(2+) is required as a cofactor.

The protein resides in the cytoplasm. Its function is as follows. Participates actively in the response to hyperosmotic and heat shock by preventing the aggregation of stress-denatured proteins and by disaggregating proteins, also in an autonomous, DnaK-independent fashion. Unfolded proteins bind initially to DnaJ; upon interaction with the DnaJ-bound protein, DnaK hydrolyzes its bound ATP, resulting in the formation of a stable complex. GrpE releases ADP from DnaK; ATP binding to DnaK triggers the release of the substrate protein, thus completing the reaction cycle. Several rounds of ATP-dependent interactions between DnaJ, DnaK and GrpE are required for fully efficient folding. Also involved, together with DnaK and GrpE, in the DNA replication of plasmids through activation of initiation proteins. This chain is Chaperone protein DnaJ, found in Erwinia tasmaniensis (strain DSM 17950 / CFBP 7177 / CIP 109463 / NCPPB 4357 / Et1/99).